We begin with the raw amino-acid sequence, 306 residues long: Glutaminase (306 aa).

Positions 64, 115, 159, 166, 190, 242, and 260 each coordinate substrate.

It belongs to the glutaminase family. As to quaternary structure, homotetramer.

It catalyses the reaction L-glutamine + H2O = L-glutamate + NH4(+). The chain is Glutaminase from Vibrio atlanticus (strain LGP32) (Vibrio splendidus (strain Mel32)).